Consider the following 577-residue polypeptide: DEAD-box ATP-dependent RNA helicase 22 (577 aa).

Residues Thr-82–Ala-110 carry the Q motif motif. Residues Ile-113 to Asn-375 form the Helicase ATP-binding domain. Ala-126–Thr-133 is a binding site for ATP. Residues Asp-249–Asp-252 carry the DEAD box motif. A disordered region spans residues Ser-288 to Leu-317. Residues Leu-407 to Ala-568 form the Helicase C-terminal domain.

The protein belongs to the DEAD box helicase family.

The enzyme catalyses ATP + H2O = ADP + phosphate + H(+). The chain is DEAD-box ATP-dependent RNA helicase 22 from Oryza sativa subsp. japonica (Rice).